The following is a 445-amino-acid chain: Tubulin beta chain (445 aa).

GTP-binding residues include Gln-11, Glu-69, Ser-138, Gly-142, Thr-143, Gly-144, Asn-204, and Asn-226. Glu-69 contacts Mg(2+). A disordered region spans residues 426 to 445; that stretch reads QDATAEEEGEFEEEEGDVEA. The segment covering 429-445 has biased composition (acidic residues); the sequence is TAEEEGEFEEEEGDVEA.

It belongs to the tubulin family. In terms of assembly, dimer of alpha and beta chains. A typical microtubule is a hollow water-filled tube with an outer diameter of 25 nm and an inner diameter of 15 nM. Alpha-beta heterodimers associate head-to-tail to form protofilaments running lengthwise along the microtubule wall with the beta-tubulin subunit facing the microtubule plus end conferring a structural polarity. Microtubules usually have 13 protofilaments but different protofilament numbers can be found in some organisms and specialized cells. Interacts with DCX/apicortin; the interaction stabilizes microtubule assembly. Requires Mg(2+) as cofactor.

The protein localises to the cytoplasm. It is found in the cytoskeleton. Its function is as follows. Tubulin is the major constituent of microtubules, a cylinder consisting of laterally associated linear protofilaments composed of alpha- and beta-tubulin heterodimers. Microtubules grow by the addition of GTP-tubulin dimers to the microtubule end, where a stabilizing cap forms. Below the cap, tubulin dimers are in GDP-bound state, owing to GTPase activity of alpha-tubulin. This Plasmodium falciparum (isolate 3D7) protein is Tubulin beta chain.